The chain runs to 140 residues: ATP synthase epsilon chain (140 aa).

Belongs to the ATPase epsilon chain family. As to quaternary structure, F-type ATPases have 2 components, CF(1) - the catalytic core - and CF(0) - the membrane proton channel. CF(1) has five subunits: alpha(3), beta(3), gamma(1), delta(1), epsilon(1). CF(0) has three main subunits: a, b and c.

Its subcellular location is the cell inner membrane. Functionally, produces ATP from ADP in the presence of a proton gradient across the membrane. The polypeptide is ATP synthase epsilon chain (Bordetella bronchiseptica (strain ATCC BAA-588 / NCTC 13252 / RB50) (Alcaligenes bronchisepticus)).